Here is a 479-residue protein sequence, read N- to C-terminus: Membrane-bound lytic murein transglycosylase F (479 aa).

A signal peptide spans 1–18; it reads MKGLFIRIVLAICLSLWA. Residues 19–266 are non-LT domain; that stretch reads IDMVFPWQQI…RIEEKYFNHL (248 aa). The tract at residues 267 to 479 is LT domain; that stretch reads NQFDYVDTRS…ISTQTQQEQR (213 aa). Glu311 is an active-site residue.

It in the N-terminal section; belongs to the bacterial solute-binding protein 3 family. The protein in the C-terminal section; belongs to the transglycosylase Slt family.

The protein localises to the cell outer membrane. It carries out the reaction Exolytic cleavage of the (1-&gt;4)-beta-glycosidic linkage between N-acetylmuramic acid (MurNAc) and N-acetylglucosamine (GlcNAc) residues in peptidoglycan, from either the reducing or the non-reducing ends of the peptidoglycan chains, with concomitant formation of a 1,6-anhydrobond in the MurNAc residue.. Its function is as follows. Murein-degrading enzyme that degrades murein glycan strands and insoluble, high-molecular weight murein sacculi, with the concomitant formation of a 1,6-anhydromuramoyl product. Lytic transglycosylases (LTs) play an integral role in the metabolism of the peptidoglycan (PG) sacculus. Their lytic action creates space within the PG sacculus to allow for its expansion as well as for the insertion of various structures such as secretion systems and flagella. The polypeptide is Membrane-bound lytic murein transglycosylase F (Histophilus somni (strain 2336) (Haemophilus somnus)).